We begin with the raw amino-acid sequence, 512 residues long: Lysine--tRNA ligase (512 aa).

Positions 408 and 415 each coordinate Mg(2+).

Belongs to the class-II aminoacyl-tRNA synthetase family. In terms of assembly, homodimer. The cofactor is Mg(2+).

It localises to the cytoplasm. It carries out the reaction tRNA(Lys) + L-lysine + ATP = L-lysyl-tRNA(Lys) + AMP + diphosphate. In Prochlorococcus marinus (strain MIT 9301), this protein is Lysine--tRNA ligase.